Reading from the N-terminus, the 224-residue chain is 7-cyano-7-deazaguanine synthase (224 aa).

An ATP-binding site is contributed by Leu-10–Val-20. The Zn(2+) site is built by Cys-189, Cys-199, Cys-202, and Cys-205.

Belongs to the QueC family. Requires Zn(2+) as cofactor.

The catalysed reaction is 7-carboxy-7-deazaguanine + NH4(+) + ATP = 7-cyano-7-deazaguanine + ADP + phosphate + H2O + H(+). Its pathway is purine metabolism; 7-cyano-7-deazaguanine biosynthesis. In terms of biological role, catalyzes the ATP-dependent conversion of 7-carboxy-7-deazaguanine (CDG) to 7-cyano-7-deazaguanine (preQ(0)). The chain is 7-cyano-7-deazaguanine synthase from Ectopseudomonas mendocina (strain ymp) (Pseudomonas mendocina).